We begin with the raw amino-acid sequence, 53 residues long: uncharacterized protein (53 aa).

The segment at 34–53 (RKEKGKRHAAPLSLMGVHKR) is disordered.

This is an uncharacterized protein from Treponema pallidum (strain Nichols).